The following is a 166-amino-acid chain: Regulator of ribonuclease activity A (166 aa).

This sequence belongs to the RraA family. Homotrimer. Binds to both RNA-binding sites in the C-terminal region of Rne and to RhlB.

It localises to the cytoplasm. Functionally, globally modulates RNA abundance by binding to RNase E (Rne) and regulating its endonucleolytic activity. Can modulate Rne action in a substrate-dependent manner by altering the composition of the degradosome. Modulates RNA-binding and helicase activities of the degradosome. The sequence is that of Regulator of ribonuclease activity A from Actinobacillus succinogenes (strain ATCC 55618 / DSM 22257 / CCUG 43843 / 130Z).